Reading from the N-terminus, the 833-residue chain is Translation initiation factor IF-2 (833 aa).

The tr-type G domain maps to 331–501; it reads TRAPVVTVMG…LLIAEMQDLK (171 aa). The segment at 340–347 is G1; sequence GHVDHGKT. 340-347 provides a ligand contact to GTP; sequence GHVDHGKT. Residues 365 to 369 form a G2 region; the sequence is GITQH. The segment at 387-390 is G3; sequence DTPG. Residues 387–391 and 441–444 contribute to the GTP site; these read DTPGH and NKID. Residues 441–444 form a G4 region; the sequence is NKID. Residues 477-479 form a G5 region; sequence SAL.

Belongs to the TRAFAC class translation factor GTPase superfamily. Classic translation factor GTPase family. IF-2 subfamily.

The protein localises to the cytoplasm. Functionally, one of the essential components for the initiation of protein synthesis. Protects formylmethionyl-tRNA from spontaneous hydrolysis and promotes its binding to the 30S ribosomal subunits. Also involved in the hydrolysis of GTP during the formation of the 70S ribosomal complex. The chain is Translation initiation factor IF-2 from Rickettsia canadensis (strain McKiel).